A 313-amino-acid polypeptide reads, in one-letter code: Dihydroorotate dehydrogenase B (NAD(+)), catalytic subunit (313 aa).

FMN is bound by residues serine 21 and 45 to 46 (KA). Residues lysine 45 and 69–73 (NAIGL) contribute to the substrate site. FMN-binding residues include asparagine 99 and asparagine 127. Asparagine 127 provides a ligand contact to substrate. Cysteine 130 (nucleophile) is an active-site residue. Lysine 165 and isoleucine 191 together coordinate FMN. 192-193 (NT) serves as a coordination point for substrate. FMN is bound by residues glycine 217, 243 to 244 (GG), and 265 to 266 (GT).

It belongs to the dihydroorotate dehydrogenase family. Type 1 subfamily. As to quaternary structure, heterotetramer of 2 PyrK and 2 PyrD type B subunits. Requires FMN as cofactor.

Its subcellular location is the cytoplasm. The enzyme catalyses (S)-dihydroorotate + NAD(+) = orotate + NADH + H(+). The protein operates within pyrimidine metabolism; UMP biosynthesis via de novo pathway; orotate from (S)-dihydroorotate (NAD(+) route): step 1/1. Functionally, catalyzes the conversion of dihydroorotate to orotate with NAD(+) as electron acceptor. The protein is Dihydroorotate dehydrogenase B (NAD(+)), catalytic subunit (pyrD) of Geobacillus kaustophilus (strain HTA426).